A 355-amino-acid polypeptide reads, in one-letter code: Uroporphyrinogen decarboxylase (355 aa).

Substrate is bound by residues 27–31 (RQAGR), Asp77, Tyr154, Thr209, and His328.

Belongs to the uroporphyrinogen decarboxylase family. Homodimer.

It is found in the cytoplasm. It catalyses the reaction uroporphyrinogen III + 4 H(+) = coproporphyrinogen III + 4 CO2. Its pathway is porphyrin-containing compound metabolism; protoporphyrin-IX biosynthesis; coproporphyrinogen-III from 5-aminolevulinate: step 4/4. Its function is as follows. Catalyzes the decarboxylation of four acetate groups of uroporphyrinogen-III to yield coproporphyrinogen-III. The sequence is that of Uroporphyrinogen decarboxylase from Aliivibrio salmonicida (strain LFI1238) (Vibrio salmonicida (strain LFI1238)).